The chain runs to 97 residues: Class II hydrophobin 1 (97 aa).

The signal sequence occupies residues 1–16; the sequence is MKFFAIAALFAAAAVA. The propeptide occupies 17 to 22; it reads QPLEDR. Disulfide bonds link C30–C79, C40–C70, C41–C53, and C80–C91.

The protein belongs to the cerato-ulmin hydrophobin family. As to quaternary structure, homotetramer. Further self-assembles to form highly ordered films at water-air interfaces through intermolecular interactions.

It localises to the secreted. The protein resides in the cell wall. In terms of biological role, aerial growth, conidiation, and dispersal of filamentous fungi in the environment rely upon a capability of their secreting small amphipathic proteins called hydrophobins (HPBs) with low sequence identity. Class I can self-assemble into an outermost layer of rodlet bundles on aerial cell surfaces, conferring cellular hydrophobicity that supports fungal growth, development and dispersal; whereas Class II form highly ordered films at water-air interfaces through intermolecular interactions but contribute nothing to the rodlet structure. Hbf1 is a class II hydrophobin that has a role in hyphal development and is in particular required for the formation of aerial hyphae. The polypeptide is Class II hydrophobin 1 (Hypocrea jecorina (Trichoderma reesei)).